The following is a 329-amino-acid chain: MAMTAAVKDEISRLPVTRTCCRKAEVSAILRFAGGLHLVSGRIVIEAELDTAMAARRLKRDILEIFGHSSELIVMAPGGLRRGSRYVVRVVAGGDQLARQTGLVDGRGRPIRGLPPQVVSGATCDAEAAWRGAFLAHGSLTEPGRSSSLEVTCPGPEAALALVGAARRLSIAAKAREVRGVDRVVVRDGDAIGALLTRLGAHESVLAWEERRMRREVRATANRLANFDDANLRRSARAAVAAGARVQRALEILADEVPEHLAAAGRLRMEHKQASLEELGALADPPLTKDAVAGRIRRLLAMADKRAQDLGIPGTESNLTEEMADNLAG.

Residues 275-308 (SLEELGALADPPLTKDAVAGRIRRLLAMADKRAQ) constitute a DNA-binding region (H-T-H motif).

Belongs to the WhiA family.

In terms of biological role, involved in cell division and chromosome segregation. The sequence is that of Probable cell division protein WhiA from Streptomyces avermitilis (strain ATCC 31267 / DSM 46492 / JCM 5070 / NBRC 14893 / NCIMB 12804 / NRRL 8165 / MA-4680).